The sequence spans 236 residues: Small ribosomal subunit protein uS2c (236 aa).

It belongs to the universal ribosomal protein uS2 family.

Its subcellular location is the plastid. It is found in the chloroplast. This chain is Small ribosomal subunit protein uS2c (rps2), found in Lactuca sativa (Garden lettuce).